Here is a 1066-residue protein sequence, read N- to C-terminus: Isoleucine--tRNA ligase (1066 aa).

The 'HIGH' region motif lies at proline 49–threonine 59. A 'KMSKS' region motif is present at residues lysine 625–serine 629. Position 628 (lysine 628) interacts with ATP.

This sequence belongs to the class-I aminoacyl-tRNA synthetase family. IleS type 2 subfamily. As to quaternary structure, monomer. The cofactor is Zn(2+).

The protein localises to the cytoplasm. It catalyses the reaction tRNA(Ile) + L-isoleucine + ATP = L-isoleucyl-tRNA(Ile) + AMP + diphosphate. Catalyzes the attachment of isoleucine to tRNA(Ile). As IleRS can inadvertently accommodate and process structurally similar amino acids such as valine, to avoid such errors it has two additional distinct tRNA(Ile)-dependent editing activities. One activity is designated as 'pretransfer' editing and involves the hydrolysis of activated Val-AMP. The other activity is designated 'posttransfer' editing and involves deacylation of mischarged Val-tRNA(Ile). This Pyrococcus furiosus (strain ATCC 43587 / DSM 3638 / JCM 8422 / Vc1) protein is Isoleucine--tRNA ligase.